The primary structure comprises 314 residues: Homoserine O-succinyltransferase (314 aa).

C142 serves as the catalytic Acyl-thioester intermediate. Substrate is bound by residues K163 and S192. The active-site Proton acceptor is the H235. E237 is a catalytic residue. R249 provides a ligand contact to substrate.

This sequence belongs to the MetA family.

The protein resides in the cytoplasm. It catalyses the reaction L-homoserine + succinyl-CoA = O-succinyl-L-homoserine + CoA. It participates in amino-acid biosynthesis; L-methionine biosynthesis via de novo pathway; O-succinyl-L-homoserine from L-homoserine: step 1/1. In terms of biological role, transfers a succinyl group from succinyl-CoA to L-homoserine, forming succinyl-L-homoserine. The chain is Homoserine O-succinyltransferase from Aeromonas salmonicida (strain A449).